The primary structure comprises 315 residues: Homoserine kinase (315 aa).

97–107 (PPARGLGSSAT) provides a ligand contact to ATP.

Belongs to the GHMP kinase family. Homoserine kinase subfamily.

Its subcellular location is the cytoplasm. It catalyses the reaction L-homoserine + ATP = O-phospho-L-homoserine + ADP + H(+). The protein operates within amino-acid biosynthesis; L-threonine biosynthesis; L-threonine from L-aspartate: step 4/5. Functionally, catalyzes the ATP-dependent phosphorylation of L-homoserine to L-homoserine phosphate. This chain is Homoserine kinase, found in Prochlorococcus marinus (strain MIT 9312).